The following is a 244-amino-acid chain: Phosphatidylserine decarboxylase proenzyme (244 aa).

Ser-212 serves as the catalytic Schiff-base intermediate with substrate; via pyruvic acid. Position 212 is a pyruvic acid (Ser); by autocatalysis (Ser-212).

This sequence belongs to the phosphatidylserine decarboxylase family. PSD-A subfamily. As to quaternary structure, heterodimer of a large membrane-associated beta subunit and a small pyruvoyl-containing alpha subunit. Requires pyruvate as cofactor. In terms of processing, is synthesized initially as an inactive proenzyme. Formation of the active enzyme involves a self-maturation process in which the active site pyruvoyl group is generated from an internal serine residue via an autocatalytic post-translational modification. Two non-identical subunits are generated from the proenzyme in this reaction, and the pyruvate is formed at the N-terminus of the alpha chain, which is derived from the carboxyl end of the proenzyme. The post-translation cleavage follows an unusual pathway, termed non-hydrolytic serinolysis, in which the side chain hydroxyl group of the serine supplies its oxygen atom to form the C-terminus of the beta chain, while the remainder of the serine residue undergoes an oxidative deamination to produce ammonia and the pyruvoyl prosthetic group on the alpha chain.

The protein resides in the cell membrane. It carries out the reaction a 1,2-diacyl-sn-glycero-3-phospho-L-serine + H(+) = a 1,2-diacyl-sn-glycero-3-phosphoethanolamine + CO2. It functions in the pathway phospholipid metabolism; phosphatidylethanolamine biosynthesis; phosphatidylethanolamine from CDP-diacylglycerol: step 2/2. Catalyzes the formation of phosphatidylethanolamine (PtdEtn) from phosphatidylserine (PtdSer). The chain is Phosphatidylserine decarboxylase proenzyme from Granulibacter bethesdensis (strain ATCC BAA-1260 / CGDNIH1).